The primary structure comprises 181 residues: MGLYVSRLFNRLFQKKDVRILMVGLDAAGKTTILYKVKLGEVVTTIPTIGFNVETVEFRNISFTVWDVGGQDKIRPLWRHYYSNTDGLIFVVDSNDRERIDDAREELHRMINEEELKDAIILVFANKQDLPNAMSAAEVTEKLHLNTIRERNWFIQSTCATRGDGLYEGFDWLTTHLNNAK.

The N-myristoyl glycine moiety is linked to residue G2. The important for the stable binding to the membranes stretch occupies residues 3–16 (LYVSRLFNRLFQKK). GTP contacts are provided by residues 27-32 (AAGKTT), 126-129 (NKQD), and A160.

The protein belongs to the small GTPase superfamily. Arf family. May interact with GTPase RAB5b.

The protein localises to the golgi apparatus membrane. It carries out the reaction GTP + H2O = GDP + phosphate + H(+). Its activity is regulated as follows. Alternates between an inactive GDP-bound form and an active GTP-bound form. Intrinsic GTPase activity is almost undetectable in vitro. Activated by a guanine nucleotide-exchange factor (GEF) and inactivated by GTPase-activating protein ARFGAP1. Its function is as follows. Small GTPase involved in protein trafficking between different compartments. Modulates vesicle budding and uncoating within the Golgi complex. In its GTP-bound form, triggers the recruitment of coatomer proteins to the Golgi membrane. The hydrolysis of ARF1-bound GTP, which is mediated by ARFGAPs proteins, is required for dissociation of coat proteins from Golgi membranes and vesicles. Regulates the transport of N-acylated AK2 to the parasitophorous vacuole membrane. May be involved in the activation of lipid kinase PIP5K. This Plasmodium falciparum (isolate 3D7) protein is ADP-ribosylation factor 1.